A 1191-amino-acid polypeptide reads, in one-letter code: DNA-directed RNA polymerase subunit beta (1191 aa).

Residues Arg1171 to Ala1181 are compositionally biased toward basic and acidic residues. The interval Arg1171–Asp1191 is disordered. The span at Glu1182–Asp1191 shows a compositional bias: low complexity.

The protein belongs to the RNA polymerase beta chain family. In terms of assembly, the RNAP catalytic core consists of 2 alpha, 1 beta, 1 beta' and 1 omega subunit. When a sigma factor is associated with the core the holoenzyme is formed, which can initiate transcription.

The catalysed reaction is RNA(n) + a ribonucleoside 5'-triphosphate = RNA(n+1) + diphosphate. DNA-dependent RNA polymerase catalyzes the transcription of DNA into RNA using the four ribonucleoside triphosphates as substrates. This chain is DNA-directed RNA polymerase subunit beta, found in Streptococcus agalactiae serotype Ia (strain ATCC 27591 / A909 / CDC SS700).